The following is a 311-amino-acid chain: ADP-ribosyl cyclase/cyclic ADP-ribose hydrolase 2 (311 aa).

The first 24 residues, 1-24, serve as a signal peptide directing secretion; sequence MAVQGGLLSLWLWLWLSLLTVLLG. 3 disulfides stabilise this stretch: Cys-46/Cys-60, Cys-76/Cys-156, and Cys-137/Cys-150. 2 N-linked (GlcNAc...) asparagine glycosylation sites follow: Asn-59 and Asn-88. Trp-102 lines the NAD(+) pocket. Trp-102 contributes to the nicotinamide binding site. N-linked (GlcNAc...) asparagine glycosylation occurs at Asn-141. Position 165 (Trp-165) interacts with NAD(+). Residue Asn-185 is glycosylated (N-linked (GlcNAc...) asparagine). Position 203 (Glu-203) interacts with NAD(+). Cystine bridges form between Cys-231-Cys-252 and Cys-264-Cys-273. Ser-286 carries the GPI-anchor amidated serine lipid modification. Residues 287–311 constitute a propeptide that is removed on maturation; that stretch reads ASLHAIGDASLLISLLVALASSSQA.

The protein belongs to the ADP-ribosyl cyclase family. Homodimer. In terms of tissue distribution, expressed in the bone marrow, spleen and thymus in lymphoid organs, and the lung, kidney and heart in non-lymphoid organs.

Its subcellular location is the cell membrane. It carries out the reaction NAD(+) + H2O = ADP-D-ribose + nicotinamide + H(+). The enzyme catalyses NAD(+) = cyclic ADP-beta-D-ribose + nicotinamide + H(+). The catalysed reaction is cyclic ADP-beta-D-ribose + H2O = ADP-D-ribose. In terms of biological role, catalyzes both the synthesis of cyclic ADP-beta-D-ribose (cADPR) from NAD(+), and its hydrolysis to ADP-D-ribose (ADPR). Cyclic ADPR is known to serve as an endogenous second messenger that elicits calcium release from intracellular stores, and thus regulates the mobilization of intracellular calcium. May be involved in pre-B-cell growth. The polypeptide is ADP-ribosyl cyclase/cyclic ADP-ribose hydrolase 2 (Bst1) (Mus musculus (Mouse)).